A 159-amino-acid polypeptide reads, in one-letter code: MRSSTVLYVLGAAILAVNGVTTALISDGVDKGSQEQTRWLRSNAMEHETDDEERVLEFKLPSSISTWRAERFERLESLEKQKEMERQAVLELVDKYAPLLLTDRMFAGFTKLDQEGIPLPSMIALLREHGKDITSEMEAYLINSYKTTHKIPLELNTAR.

A signal peptide spans 1-19 (MRSSTVLYVLGAAILAVNG). Residues 38–54 (RWLRSNAMEHETDDEER) carry the RxLR-dEER motif.

This sequence belongs to the RxLR effector family.

Its subcellular location is the secreted. The protein resides in the host nucleus. It localises to the host cytoplasm. Functionally, secreted effector that completely suppresses the host cell death induced by cell death-inducing proteins. This chain is Secreted RxLR effector protein 50, found in Plasmopara viticola (Downy mildew of grapevine).